The chain runs to 357 residues: Heat-inducible transcription repressor HrcA (357 aa).

It belongs to the HrcA family.

Its function is as follows. Negative regulator of class I heat shock genes (grpE-dnaK-dnaJ and groELS operons). Prevents heat-shock induction of these operons. In Chlorobium phaeobacteroides (strain DSM 266 / SMG 266 / 2430), this protein is Heat-inducible transcription repressor HrcA.